Reading from the N-terminus, the 587-residue chain is Integrator complex subunit 14 (587 aa).

One can recognise a VWFA domain in the interval 3–113 (TLIALDASLS…NILQVVVFTD (111 aa)). Disordered regions lie at residues 190–211 (KSSD…KSEL) and 304–331 (REKS…DTSN).

This sequence belongs to the Integrator subunit 14 family. As to quaternary structure, belongs to the multiprotein complex Integrator, at least composed of IntS1, IntS2, IntS3, IntS4, omd/IntS5, IntS6, defl/IntS7, IntS8, IntS9, IntS10, IntS11, IntS12, asun/IntS13, IntS14 and IntS15. The core complex associates with protein phosphatase 2A subunits mts/PP2A and Pp2A-29B, to form the Integrator-PP2A (INTAC) complex.

It is found in the nucleus. In terms of biological role, component of the integrator complex, a multiprotein complex that terminates RNA polymerase II (Pol II) transcription in the promoter-proximal region of genes. The integrator complex provides a quality checkpoint during transcription elongation by driving premature transcription termination of transcripts that are unfavorably configured for transcriptional elongation: the complex terminates transcription by (1) catalyzing dephosphorylation of the C-terminal domain (CTD) of Pol II subunit Polr2A/Rbp1 and Spt5, and (2) degrading the exiting nascent RNA transcript via endonuclease activity. The integrator complex is also involved in the 3'-end processing of the U7 snRNA, and also the spliceosomal snRNAs U1, U2, U4 and U5. The protein is Integrator complex subunit 14 of Drosophila melanogaster (Fruit fly).